A 156-amino-acid chain; its full sequence is Cytochrome c-type biogenesis protein CcmE (156 aa).

At 1-8 (MNPLRRKR) the chain is on the cytoplasmic side. The chain crosses the membrane as a helical; Signal-anchor for type II membrane protein span at residues 9 to 29 (LLIILAILAGVGIAVGLAMSA). The Periplasmic segment spans residues 30–156 (LRENINLFYT…RIRSLPRRAK (127 aa)). Positions 124 and 128 each coordinate heme.

Belongs to the CcmE/CycJ family.

It is found in the cell inner membrane. Functionally, heme chaperone required for the biogenesis of c-type cytochromes. Transiently binds heme delivered by CcmC and transfers the heme to apo-cytochromes in a process facilitated by CcmF and CcmH. This Pseudomonas fluorescens protein is Cytochrome c-type biogenesis protein CcmE.